The chain runs to 100 residues: Small ribosomal subunit protein uS14c (100 aa).

It belongs to the universal ribosomal protein uS14 family. As to quaternary structure, part of the 30S ribosomal subunit.

It localises to the plastid. The protein localises to the chloroplast. Functionally, binds 16S rRNA, required for the assembly of 30S particles. The chain is Small ribosomal subunit protein uS14c from Cyanidioschyzon merolae (strain NIES-3377 / 10D) (Unicellular red alga).